We begin with the raw amino-acid sequence, 465 residues long: MTIHIYNTLTRQKEEFIPLEEKKVKMYVCGPTVYNYIHIGNARPPMVFDTVRRYLEHKGYDVQYVSNFTDVDDKLIKAANELGEDVPTIAERFIEAYFEDVTALGCKHATVHPRVTENMDIIIEFIQELVNKGYAYESEGDVYYRTKEFEGYGKLSHQAIEDLRHGARIEVGEKKQDPLDFALWKAAKEGEIFWESPWGKGRPGWHIECSAMARKYLGDSIDIHAGGQDLSFPHHENEIAQSEALTGKPFARYWMHNGYININNEKMSKSLGNFILVHDIIKQYDPQLIRFFMLSVHYRHPINFSEELLQSTNNGLERIKTTYRNLKHRIESSTDLTDHNEKWLAEMKEFQSAFEAAMDDDFNTANAITELYNLANHANQYLLEEHTSKVVIEAYINQLEMLFRILGLVFTKEELLDKEIEALIQKRIEARKNRDFALADKIRDDLKERNIILEDTAQGTRWKRG.

A Zn(2+)-binding site is contributed by cysteine 29. Positions 31-41 (PTVYNYIHIGN) match the 'HIGH' region motif. Cysteine 209, histidine 234, and glutamate 238 together coordinate Zn(2+). A 'KMSKS' region motif is present at residues 266-270 (KMSKS). Lysine 269 is an ATP binding site. Serine 270 is subject to Phosphoserine.

This sequence belongs to the class-I aminoacyl-tRNA synthetase family. As to quaternary structure, monomer. Zn(2+) is required as a cofactor.

It is found in the cytoplasm. The enzyme catalyses tRNA(Cys) + L-cysteine + ATP = L-cysteinyl-tRNA(Cys) + AMP + diphosphate. This chain is Cysteine--tRNA ligase, found in Bacillus cytotoxicus (strain DSM 22905 / CIP 110041 / 391-98 / NVH 391-98).